We begin with the raw amino-acid sequence, 193 residues long: Zinc finger protein AZF3 (193 aa).

2 consecutive C2H2-type zinc fingers follow at residues 75–97 and 118–140; these read YKCG…KASH and HVCS…KRCH.

As to expression, expressed in roots.

The protein resides in the nucleus. In terms of biological role, transcriptional repressor probably involved in abiotic stress responses. Binds DNA in a sequence-specific manner and can repress the transactivation activity of other transcription factors. This chain is Zinc finger protein AZF3 (AZF3), found in Arabidopsis thaliana (Mouse-ear cress).